Reading from the N-terminus, the 344-residue chain is L-rhamnose-proton symporter (344 aa).

The next 10 helical transmembrane spans lie at 4–24, 38–58, 68–88, 101–121, 137–157, 175–195, 214–234, 259–279, 290–310, and 323–343; these read AITM…CFYA, WSVG…ALLL, FSLS…IGNI, MGIG…TPII, TLLG…AGQL, LVLA…MNAA, LPSY…FCFI, VLLS…YAWG, ISWM…GLVL, and VLSL…IGMA.

This sequence belongs to the L-rhamnose transporter (TC 2.A.7.6) family.

The protein localises to the cell inner membrane. It carries out the reaction L-rhamnopyranose(in) + H(+)(in) = L-rhamnopyranose(out) + H(+)(out). Its function is as follows. Uptake of L-rhamnose across the cytoplasmic membrane with the concomitant transport of protons into the cell (symport system). This Shigella dysenteriae serotype 1 (strain Sd197) protein is L-rhamnose-proton symporter.